A 292-amino-acid polypeptide reads, in one-letter code: Ribosomal protein L11 methyltransferase (292 aa).

4 residues coordinate S-adenosyl-L-methionine: Thr-138, Gly-159, Asp-181, and Asn-225.

It belongs to the methyltransferase superfamily. PrmA family.

The protein localises to the cytoplasm. The catalysed reaction is L-lysyl-[protein] + 3 S-adenosyl-L-methionine = N(6),N(6),N(6)-trimethyl-L-lysyl-[protein] + 3 S-adenosyl-L-homocysteine + 3 H(+). Functionally, methylates ribosomal protein L11. This chain is Ribosomal protein L11 methyltransferase, found in Leuconostoc citreum (strain KM20).